The primary structure comprises 364 residues: RNA-binding protein 4 (364 aa).

RRM domains lie at 2–72 and 78–148; these read VKLF…ASKN and TKLH…LSTS. Lys79 participates in a covalent cross-link: Glycyl lysine isopeptide (Lys-Gly) (interchain with G-Cter in SUMO2). The residue at position 86 (Ser86) is a Phosphoserine. Lys92 is covalently cross-linked (Glycyl lysine isopeptide (Lys-Gly) (interchain with G-Cter in SUMO2)). The segment at 160–177 adopts a CCHC-type zinc-finger fold; sequence SGCYRCGKEGHWSKECPI. The segment at 196-364 is interaction with TNPO3; it reads AVRTPYTMSY…YADRARYSAF (169 aa). Ser309 carries the phosphoserine modification.

Interacts with TNPO3; the interaction mediates nuclear import of the protein and is disrupted by nuclear Ran bound to GTP. Interacts with EIF4G1 and WT1. Interacts with EIF4A1; the interaction is modulated under stress-induced conditions. Interacts with AGO1. Interacts with AGO2; the interaction occurs under both cell proliferation and differentiation conditions and in an RNA- and phosphorylation-independent manner. Interacts with DDX5; the interaction occurs in an RNA-independent manner. Interacts with RBPMS; the interaction allows cooperative assembly of RNA-bound stable cell-specific alternative splicing regulatory complexes. Phosphorylated. Phosphorylated in vitro on Ser-309 by SRPK1. Phosphorylation on Ser-309 is induced upon cell stress signaling, which alters its subcellular localization and may modulate its activity on IRES-mediated mRNA translation. Phosphorylation on Ser-309 is induced upon cell muscle differentiation.

The protein localises to the nucleus. It localises to the nucleolus. The protein resides in the nucleus speckle. It is found in the cytoplasm. Its subcellular location is the cytoplasmic granule. Functionally, RNA-binding factor involved in multiple aspects of cellular processes like alternative splicing of pre-mRNA and translation regulation. Modulates alternative 5'-splice site and exon selection. Acts as a muscle cell differentiation-promoting factor. Activates exon skipping of the PTB pre-mRNA during muscle cell differentiation. Antagonizes the activity of the splicing factor PTBP1 to modulate muscle cell-specific exon selection of alpha tropomyosin. Binds to intronic pyrimidine-rich sequence of the TPM1 and MAPT pre-mRNAs. Required for the translational activation of PER1 mRNA in response to circadian clock. Binds directly to the 3'-UTR of the PER1 mRNA. Exerts a suppressive activity on Cap-dependent translation via binding to CU-rich responsive elements within the 3'UTR of mRNAs, a process increased under stress conditions or during myocytes differentiation. Recruits EIF4A1 to stimulate IRES-dependent translation initiation in respons to cellular stress. Associates to internal ribosome entry segment (IRES) in target mRNA species under stress conditions. Plays a role for miRNA-guided RNA cleavage and translation suppression by promoting association of AGO2-containing miRNPs with their cognate target mRNAs. Associates with miRNAs during muscle cell differentiation. Binds preferentially to 5'-CGCGCG[GCA]-3' motif in vitro. The chain is RNA-binding protein 4 (RBM4) from Macaca fascicularis (Crab-eating macaque).